Here is a 381-residue protein sequence, read N- to C-terminus: Chaperone protein DnaJ 1 (381 aa).

A J domain is found at 4-68 (DYYGLLGVSR…EKRRIVDLGG (65 aa)). The segment at 132-214 (GVTKQVTVDT…CMGDGRVRAR (83 aa)) adopts a CR-type zinc-finger fold. Zn(2+) contacts are provided by cysteine 145, cysteine 148, cysteine 162, cysteine 165, cysteine 188, cysteine 191, cysteine 202, and cysteine 205. 4 CXXCXGXG motif repeats span residues 145–152 (CDRCHGKG), 162–169 (CDTCGGRG), 188–195 (CPTCRGVG), and 202–209 (CHQCMGDG).

The protein belongs to the DnaJ family. In terms of assembly, homodimer. Zn(2+) serves as cofactor.

It localises to the cytoplasm. In terms of biological role, participates actively in the response to hyperosmotic and heat shock by preventing the aggregation of stress-denatured proteins and by disaggregating proteins, also in an autonomous, DnaK-independent fashion. Unfolded proteins bind initially to DnaJ; upon interaction with the DnaJ-bound protein, DnaK hydrolyzes its bound ATP, resulting in the formation of a stable complex. GrpE releases ADP from DnaK; ATP binding to DnaK triggers the release of the substrate protein, thus completing the reaction cycle. Several rounds of ATP-dependent interactions between DnaJ, DnaK and GrpE are required for fully efficient folding. Also involved, together with DnaK and GrpE, in the DNA replication of plasmids through activation of initiation proteins. The protein is Chaperone protein DnaJ 1 of Mycolicibacterium paratuberculosis (strain ATCC BAA-968 / K-10) (Mycobacterium paratuberculosis).